A 334-amino-acid chain; its full sequence is Phosphate acyltransferase (334 aa).

This sequence belongs to the PlsX family. As to quaternary structure, homodimer. Probably interacts with PlsY.

It localises to the cytoplasm. It catalyses the reaction a fatty acyl-[ACP] + phosphate = an acyl phosphate + holo-[ACP]. The protein operates within lipid metabolism; phospholipid metabolism. In terms of biological role, catalyzes the reversible formation of acyl-phosphate (acyl-PO(4)) from acyl-[acyl-carrier-protein] (acyl-ACP). This enzyme utilizes acyl-ACP as fatty acyl donor, but not acyl-CoA. This Desulfitobacterium hafniense (strain DSM 10664 / DCB-2) protein is Phosphate acyltransferase.